The following is a 120-amino-acid chain: Myohemerythrin (120 aa).

Histidine 26, histidine 56, glutamate 60, histidine 75, histidine 79, histidine 108, and aspartate 113 together coordinate Fe cation.

It belongs to the hemerythrin family.

In terms of biological role, myohemerythrin is an oxygen-binding protein found in the retractor muscles of certain worms. The oxygen-binding site contains two iron atoms. The sequence is that of Myohemerythrin from Riftia pachyptila (Vent tube worm).